We begin with the raw amino-acid sequence, 1108 residues long: Probable E3 ubiquitin ligase SUD1 (1108 aa).

The segment at 1–60 (MEISPADSLSISGAAASEVVSEPSVSSSSSSSSPNQASPNPFSNMDPAVSTATGSRYVDD) is disordered. Over residues 10–44 (SISGAAASEVVSEPSVSSSSSSSSPNQASPNPFSN) the composition is skewed to low complexity. The RING-CH-type zinc finger occupies 60–121 (DDEDEEDVCR…EVCKHPFSFS (62 aa)). Zn(2+) is bound by residues C68, C71, C85, C87, H95, C98, C111, and C114. 2 helical membrane passes run 157–177 (FVLS…WRLA) and 197–217 (VILT…FIFL). The segment covering 237-246 (ERDDDVDRNG) has biased composition (basic and acidic residues). The interval 237–273 (ERDDDVDRNGARAARRPAGQANRNLAGEGNGEDAGDQ) is disordered. Residues 286 to 308 (ENVLARLDIQAARLEAQVEQMFD) are a coiled coil. The next 8 membrane-spanning stretches (helical) occupy residues 339-359 (FTVL…PFTL), 362-382 (IILY…VAAS), 462-482 (AVGY…IALI), 489-509 (PLTV…PSLL), 525-545 (VAFL…WWLD), 572-592 (LVHW…VSLL), 630-650 (VLLS…LPVK), and 669-689 (PFTE…FIIE). The disordered stretch occupies residues 762 to 784 (PNRSRLRAGNVNTGEEYEDDDEQ). 6 helical membrane-spanning segments follow: residues 796 to 816 (IILL…ALIV), 844 to 864 (YAFV…RYAI), 894 to 914 (AIWV…LVIV), 923 to 943 (SPVF…KIWT), 982 to 1002 (EIVF…YVLA), and 1017 to 1036 (SAVY…FCFC).

As to expression, expressed in cotyledons, leaves, roots, stems, inflorescences and siliques. Expression higher at the top than at the base of the stem.

It localises to the membrane. It catalyses the reaction S-ubiquitinyl-[E2 ubiquitin-conjugating enzyme]-L-cysteine + [acceptor protein]-L-lysine = [E2 ubiquitin-conjugating enzyme]-L-cysteine + N(6)-ubiquitinyl-[acceptor protein]-L-lysine.. It participates in protein modification; protein ubiquitination. Functionally, probable E3 ubiquitin ligase acting as a positive post-transcriptional regulator of 3-hydroxy-3-methylglutaryl-coenzyme A reductase activity. Might be involved in the quality control that degrades misfolded proteins. The chain is Probable E3 ubiquitin ligase SUD1 (SUD1) from Arabidopsis thaliana (Mouse-ear cress).